Here is a 178-residue protein sequence, read N- to C-terminus: RNA-binding protein (178 aa).

Positions 113–178 (PKIGSKNKKT…KGKGKRGGKR (66 aa)) are disordered. Basic residues predominate over residues 168 to 178 (SKGKGKRGGKR).

It belongs to the phytoreovirus RNA-binding protein family.

Its subcellular location is the host cytoplasm. Functionally, constituent of viral factories. Binds to ssRNA and dsRNA. This is RNA-binding protein from Wound tumor virus (WTV).